Consider the following 301-residue polypeptide: MEDEVIRIAKKMDKMVQKKNAAGALDLLKELKNIPMTLELLQSTRIGMSVNAIRKQSTDEEVTSLAKSLIKSWKKLLDGPSTDKDSEEKKKDTAVTSQNSPEAREESSSSGNMSSRKDETNARDTYVSSFPRAPSTSDSVRLKCREMLAAALRTGDDYIAIGADEEELGSQIEEAIYQEIRNTDMKYKNRVRSRISNLKDAKNPNLRKNVLCGNIPPDLFARMTAEEMASDELKEMRKNLTKEAIREHQMAKTGGTQTDLFTCGKCKKKNCTYTQVQTRSADEPMTTFVVCNECGNRWKFC.

N-acetylmethionine is present on Met-1. The TFIIS N-terminal domain maps to 3–80 (DEVIRIAKKM…KSWKKLLDGP (78 aa)). A Glycyl lysine isopeptide (Lys-Gly) (interchain with G-Cter in ubiquitin) cross-link involves residue Lys-55. Phosphoserine occurs at positions 57, 81, 97, and 100. Basic and acidic residues predominate over residues 76–93 (LLDGPSTDKDSEEKKKDT). Residues 76 to 139 (LLDGPSTDKD…FPRAPSTSDS (64 aa)) are disordered. Positions 140 to 256 (VRLKCREMLA…EHQMAKTGGT (117 aa)) constitute a TFIIS central domain. Residues 259 to 299 (DLFTCGKCKKKNCTYTQVQTRSADEPMTTFVVCNECGNRWK) form a TFIIS-type zinc finger. The Zn(2+) site is built by Cys-263, Cys-266, Cys-291, and Cys-294.

Belongs to the TFS-II family. In terms of assembly, interacts with EAF2. Associates with UBR5 and forms a transcription regulatory complex made of CDK9, Pol II, UBR5 and TCEA1/TFIIS. Part of TBP-based Pol II pre-initiation complex (PIC), in which Pol II core assembles with general transcription factors and other specific initiation factors including GTF2E1, GTF2E2, GTF2F1, GTF2F2, TCEA1, ERCC2, ERCC3, GTF2H2, GTF2H3, GTF2H4, GTF2H5, GTF2A1, GTF2A2, GTF2B and TBP; this large multi-subunit PIC complex mediates DNA unwinding and targets Pol II core to the transcription start site where the first phosphodiester bond forms.

It localises to the nucleus. In terms of biological role, necessary for efficient RNA polymerase II transcription elongation past template-encoded arresting sites. The arresting sites in DNA have the property of trapping a certain fraction of elongating RNA polymerases that pass through, resulting in locked ternary complexes. Cleavage of the nascent transcript by S-II allows the resumption of elongation from the new 3'-terminus. In Bos taurus (Bovine), this protein is Transcription elongation factor A protein 1 (TCEA1).